The chain runs to 385 residues: Alanine racemase (385 aa).

The active-site Proton acceptor; specific for D-alanine is the K40. K40 bears the N6-(pyridoxal phosphate)lysine mark. R139 serves as a coordination point for substrate. The Proton acceptor; specific for L-alanine role is filled by Y268. M315 is a binding site for substrate.

It belongs to the alanine racemase family. It depends on pyridoxal 5'-phosphate as a cofactor.

It catalyses the reaction L-alanine = D-alanine. The protein operates within amino-acid biosynthesis; D-alanine biosynthesis; D-alanine from L-alanine: step 1/1. Catalyzes the interconversion of L-alanine and D-alanine. May also act on other amino acids. In Anoxybacillus flavithermus (strain DSM 21510 / WK1), this protein is Alanine racemase (alr).